The primary structure comprises 254 residues: Imidazole glycerol phosphate synthase subunit HisF (254 aa).

Catalysis depends on residues Asp12 and Asp131.

The protein belongs to the HisA/HisF family. As to quaternary structure, heterodimer of HisH and HisF.

It localises to the cytoplasm. It catalyses the reaction 5-[(5-phospho-1-deoxy-D-ribulos-1-ylimino)methylamino]-1-(5-phospho-beta-D-ribosyl)imidazole-4-carboxamide + L-glutamine = D-erythro-1-(imidazol-4-yl)glycerol 3-phosphate + 5-amino-1-(5-phospho-beta-D-ribosyl)imidazole-4-carboxamide + L-glutamate + H(+). It participates in amino-acid biosynthesis; L-histidine biosynthesis; L-histidine from 5-phospho-alpha-D-ribose 1-diphosphate: step 5/9. Functionally, IGPS catalyzes the conversion of PRFAR and glutamine to IGP, AICAR and glutamate. The HisF subunit catalyzes the cyclization activity that produces IGP and AICAR from PRFAR using the ammonia provided by the HisH subunit. The polypeptide is Imidazole glycerol phosphate synthase subunit HisF (Kocuria rhizophila (strain ATCC 9341 / DSM 348 / NBRC 103217 / DC2201)).